The sequence spans 357 residues: Endo-1,4-beta-xylanase Xyn11B (357 aa).

The first 27 residues, 1–27, serve as a signal peptide directing secretion; that stretch reads MKIFQNTKNVIVSIAWAAALCTSAVSA. Residues 29–226 enclose the GH11 domain; that stretch reads TLTSNSTGTN…SRGSSDITVS (198 aa). E116 serves as the catalytic Nucleophile. The active-site Proton donor is E213. The interval 220–245 is disordered; sequence SSDITVSQGGSSGGGNSSSSSSASGG.

This sequence belongs to the glycosyl hydrolase 11 (cellulase G) family.

Its subcellular location is the secreted. It carries out the reaction Endohydrolysis of (1-&gt;4)-beta-D-xylosidic linkages in xylans.. It participates in glycan degradation; xylan degradation. Functionally, endo-acting xylanase which specifically cleaves internal linkages on the xylan backbone, releasing xylooligosaccharides. Is able to hydrolyze glucuronoxylan and the arabinoxylan from wheat. In Cellvibrio japonicus (Pseudomonas fluorescens subsp. cellulosa), this protein is Endo-1,4-beta-xylanase Xyn11B (xyn11B).